The sequence spans 555 residues: MTRYIFITGGVVSSLGKGITSASLGAILEAQGLTVTLLKLDPYINVDPGTMSPFQHGEVFVTEDGAETDLDLGHYERFVNATMTRKNNFTTGRVYADVIRKERRGDYLGGTIQVIPHITDEIKVKIREGADGADVALVEVGGTVGDIESLPFLEAIRQMRIELGDQQTLFIHLTLVPYVAVAGEIKTKPTQHSVKELRSIGIQPDILVCRSEQPLPDAERAKIALFTNVPEPSVISLSDVKSIYEIPLILRDQGLGNRVCEKLNIKATAADLDDWKKVVQAQKNPRHTVTVAVVGKYVDLEDSYKSLSEALIHAGIHTQTRVVIEYIDSEAIELHGTELLKKVDAILVPGGFGSRGIEGKILAAQYARENGIPYLGICLGMQIAIIEFARHKAQMENANSTEFDPKTPFPVVALVSEWMAKEGIIEKRKWGDDLGGTMRLGGQPCRLKIDSLARRLYGEDRVIERHRHRYEVNNDLIGELEKKGLVISGRSIDDRLVEMIELADHPWFVGCQFHPEFTSTPRKGHPLFIGFIKAGLAAKEAKKAVLAAPSQEKTD.

The tract at residues 1 to 265 (MTRYIFITGG…GNRVCEKLNI (265 aa)) is amidoligase domain. Ser-13 is a binding site for CTP. Ser-13 is a binding site for UTP. ATP contacts are provided by residues 14–19 (SLGKGI) and Asp-71. Residues Asp-71 and Glu-139 each coordinate Mg(2+). Residues 146–148 (DIE), 186–191 (KTKPTQ), and Lys-222 contribute to the CTP site. UTP-binding positions include 186–191 (KTKPTQ) and Lys-222. The region spanning 290-541 (TVAVVGKYVD…IKAGLAAKEA (252 aa)) is the Glutamine amidotransferase type-1 domain. Gly-351 is an L-glutamine binding site. Residue Cys-378 is the Nucleophile; for glutamine hydrolysis of the active site. Residues 379 to 382 (LGMQ), Glu-402, and Arg-469 each bind L-glutamine. Residues His-514 and Glu-516 contribute to the active site.

Belongs to the CTP synthase family. In terms of assembly, homotetramer.

It catalyses the reaction UTP + L-glutamine + ATP + H2O = CTP + L-glutamate + ADP + phosphate + 2 H(+). It carries out the reaction L-glutamine + H2O = L-glutamate + NH4(+). The catalysed reaction is UTP + NH4(+) + ATP = CTP + ADP + phosphate + 2 H(+). It functions in the pathway pyrimidine metabolism; CTP biosynthesis via de novo pathway; CTP from UDP: step 2/2. With respect to regulation, allosterically activated by GTP, when glutamine is the substrate; GTP has no effect on the reaction when ammonia is the substrate. The allosteric effector GTP functions by stabilizing the protein conformation that binds the tetrahedral intermediate(s) formed during glutamine hydrolysis. Inhibited by the product CTP, via allosteric rather than competitive inhibition. Functionally, catalyzes the ATP-dependent amination of UTP to CTP with either L-glutamine or ammonia as the source of nitrogen. Regulates intracellular CTP levels through interactions with the four ribonucleotide triphosphates. This Coxiella burnetii (strain Dugway 5J108-111) protein is CTP synthase.